The sequence spans 548 residues: Chaperonin GroEL (548 aa).

Residues 30–33, Lys-51, 87–91, Gly-415, and Asp-495 each bind ATP; these read TLGP and DGTTT.

The protein belongs to the chaperonin (HSP60) family. Forms a cylinder of 14 subunits composed of two heptameric rings stacked back-to-back. Interacts with the co-chaperonin GroES.

Its subcellular location is the cytoplasm. It catalyses the reaction ATP + H2O + a folded polypeptide = ADP + phosphate + an unfolded polypeptide.. Its function is as follows. Together with its co-chaperonin GroES, plays an essential role in assisting protein folding. The GroEL-GroES system forms a nano-cage that allows encapsulation of the non-native substrate proteins and provides a physical environment optimized to promote and accelerate protein folding. This Photorhabdus laumondii subsp. laumondii (strain DSM 15139 / CIP 105565 / TT01) (Photorhabdus luminescens subsp. laumondii) protein is Chaperonin GroEL.